The chain runs to 478 residues: Catalase (478 aa).

Residues 1 to 23 (MTNQLTTNEGQPWADNQHSQTAG) are disordered. Residues His-53 and Asn-126 contribute to the active site. Tyr-336 contacts heme.

This sequence belongs to the catalase family. It depends on heme as a cofactor.

It is found in the cytoplasm. The catalysed reaction is 2 H2O2 = O2 + 2 H2O. Decomposes hydrogen peroxide into water and oxygen; serves to protect cells from the toxic effects of hydrogen peroxide. The protein is Catalase (katA) of Latilactobacillus sakei (Lactobacillus sakei).